The primary structure comprises 88 residues: Small ribosomal subunit protein uS17 (88 aa).

The protein belongs to the universal ribosomal protein uS17 family. In terms of assembly, part of the 30S ribosomal subunit.

Functionally, one of the primary rRNA binding proteins, it binds specifically to the 5'-end of 16S ribosomal RNA. The chain is Small ribosomal subunit protein uS17 from Yersinia pseudotuberculosis serotype O:1b (strain IP 31758).